We begin with the raw amino-acid sequence, 104 residues long: L-rhamnose mutarotase (104 aa).

A substrate-binding site is contributed by Tyr18. His22 acts as the Proton donor in catalysis. Residues Tyr41 and 76–77 (WW) contribute to the substrate site.

It belongs to the rhamnose mutarotase family. Homodimer.

Its subcellular location is the cytoplasm. The catalysed reaction is alpha-L-rhamnose = beta-L-rhamnose. The protein operates within carbohydrate metabolism; L-rhamnose metabolism. L-rhamnose mutarotase involved in ulvan degradation. Ulvan is the main polysaccharide component of the Ulvales (green seaweed) cell wall. It is composed of disaccharide building blocks comprising 3-sulfated rhamnose (Rha3S) linked to D-glucuronic acid (GlcA), L-iduronic acid (IduA), or D-xylose (Xyl). L-rhamnose mutarotase catalyzes the anomeric conversion of alpha- to beta-L-rhamnose. The polypeptide is L-rhamnose mutarotase (rhaM) (Formosa agariphila (strain DSM 15362 / KCTC 12365 / LMG 23005 / KMM 3901 / M-2Alg 35-1)).